A 665-amino-acid chain; its full sequence is Protein LOW PHOTOSYNTHETIC EFFICIENCY 1, chloroplastic (665 aa).

Residues M1–L68 constitute a chloroplast transit peptide. 13 PPR repeats span residues P145–S179, G181–P217, N218–P252, N253–K283, G309–P344, S345–R375, S380–P414, V422–P456, Q457–P491, T492–P526, N527–P561, S562–P596, and N597–L631.

Belongs to the PPR family. P subfamily. As to quaternary structure, interacts with HCF173.

The protein resides in the plastid. It localises to the chloroplast thylakoid membrane. Its subcellular location is the chloroplast stroma. Functionally, required for light-regulated photosystem II (PSII) biogenesis and grana thylakoids formation by binding to the 5' UTR of PSII subunit mRNAs (e.g. psbJ, psbN and psbA) in a light-dependent manner through a redox-based mechanism, and facilitating the association of HCF173 with target mRNAs, which encodes PSII reaction center proteins (e.g. J, N and D1), thus regulating its expression by modulating ribosome loading. The chain is Protein LOW PHOTOSYNTHETIC EFFICIENCY 1, chloroplastic from Arabidopsis thaliana (Mouse-ear cress).